The chain runs to 498 residues: Resveratrol cleavage oxygenase 1 (498 aa).

Positions 105 and 136 each coordinate piceatannol. Trans-resveratrol contacts are provided by Tyr105 and Lys136. His169, His220, and His285 together coordinate Fe cation. Residue Glu355 coordinates piceatannol. Glu355 is a trans-resveratrol binding site. His481 contributes to the Fe cation binding site.

It belongs to the carotenoid oxygenase family. Fe(2+) is required as a cofactor.

The enzyme catalyses trans-resveratrol + O2 = 3,5-dihydroxybenzaldehyde + 4-hydroxybenzaldehyde. The catalysed reaction is piceatannol + O2 = 3,5-dihydroxybenzaldehyde + 3,4-dihydroxybenzaldehyde. Functionally, dioxygenase that cleaves the interphenyl C-alpha-C-beta double bond of resveratrol to yield 3,5-dihydroxybenzaldehyde and 4-hydroxybenzaldehyde. Also cleaves piceatannol, a compound that differs from resveratrol only in the occurrence of an additional hydroxyl group, which leads to the production of 3,4-dihydroxybenzaldehyde and 3,5-hydroxybenzaldehyde. In Aspergillus fumigatus (strain ATCC MYA-4609 / CBS 101355 / FGSC A1100 / Af293) (Neosartorya fumigata), this protein is Resveratrol cleavage oxygenase 1.